A 74-amino-acid chain; its full sequence is Serine rich endogenous peptide 23 (74 aa).

Residues 1 to 25 form the signal peptide; the sequence is MNKVVVYVLALSILLFFGLPNTTLA. The SCOOP motif signature appears at 52 to 66; that stretch reads KIAVGGSDSVRAHSK. The SxS motif essential for MIK2 binding motif lies at 58–60; that stretch reads SDS.

This sequence belongs to the serine rich endogenous peptide (SCOOP) phytocytokine family. In terms of assembly, interacts with MIK2 (via extracellular leucine-rich repeat domain); this interaction triggers the formation of complex between MIK2 and the BAK1/SERK3 and SERK4 coreceptors, and subsequent BAK1 activation by phosphorylation. As to expression, mostly expressed in roots, and, to a lower extent, in seedlings shoots.

It localises to the cell membrane. It is found in the secreted. Its subcellular location is the extracellular space. The protein resides in the apoplast. Its function is as follows. Brassicaceae-specific phytocytokine (plant endogenous peptide released into the apoplast) perceived by MIK2 in a BAK1/SERK3 and SERK4 coreceptors-dependent manner, that modulates various physiological and antimicrobial processes including growth prevention and reactive oxygen species (ROS) response regulation. Inhibits root growth. This Arabidopsis thaliana (Mouse-ear cress) protein is Serine rich endogenous peptide 23.